A 679-amino-acid chain; its full sequence is Translation initiation factor IF-2 (679 aa).

Residues 178 to 347 (KRPPIITVMG…LLTSEMQELK (170 aa)) form the tr-type G domain. Positions 187-194 (GHVDHGKT) are G1. 187–194 (GHVDHGKT) contacts GTP. A G2 region spans residues 212-216 (GITQH). Residues 233–236 (DTPG) form a G3 region. Residues 233–237 (DTPGH) and 287–290 (NKMD) each bind GTP. The tract at residues 287–290 (NKMD) is G4. The G5 stretch occupies residues 323 to 325 (SAK).

The protein belongs to the TRAFAC class translation factor GTPase superfamily. Classic translation factor GTPase family. IF-2 subfamily.

The protein localises to the cytoplasm. In terms of biological role, one of the essential components for the initiation of protein synthesis. Protects formylmethionyl-tRNA from spontaneous hydrolysis and promotes its binding to the 30S ribosomal subunits. Also involved in the hydrolysis of GTP during the formation of the 70S ribosomal complex. The sequence is that of Translation initiation factor IF-2 from Clostridium perfringens (strain ATCC 13124 / DSM 756 / JCM 1290 / NCIMB 6125 / NCTC 8237 / Type A).